The chain runs to 260 residues: Exosome complex component Rrp4 (260 aa).

The region spanning 59-128 (NDVVIGIVIV…SSMKVELALR (70 aa)) is the S1 motif domain. Positions 136-194 (KTGQIIKVESVKVPRVIGHGGSMISMLKKETNCSIFVGQNGRIWIDGKDEDIELLSKAL) constitute a KH domain.

It belongs to the RRP4 family. In terms of assembly, component of the archaeal exosome complex. Forms a trimer of Rrp4 and/or Csl4 subunits. The trimer associates with a hexameric ring-like arrangement composed of 3 Rrp41-Rrp42 heterodimers.

The protein localises to the cytoplasm. Its function is as follows. Non-catalytic component of the exosome, which is a complex involved in RNA degradation. Increases the RNA binding and the efficiency of RNA degradation. Confers strong poly(A) specificity to the exosome. This is Exosome complex component Rrp4 from Methanosarcina acetivorans (strain ATCC 35395 / DSM 2834 / JCM 12185 / C2A).